Consider the following 244-residue polypeptide: MLKAVIDAETLRDAIEAVSSLVDEVKFTITEKGLELKAVDPANVAMVSLKIDASAFEFYQATPGEIGVDLVRLSDLLSMADRGERVRLELLEDERKLRIGVGSLSYTLSLIDPSAIRKEPRIPELDLPAHVAIPGAEFRRAIKAAEKVSDHVVLGVKDDIFYMEAKGDIDALKLTMRSSELLDMKPGEARSLFSLDYLSDMSKSIGKAPEVKLEIGIDYPLRISFMLKDNVHVSYLLAPRIEQE.

It belongs to the PCNA family. Homotrimer. The subunits circularize to form a toroid; DNA passes through its center. Replication factor C (RFC) is required to load the toroid on the DNA.

Its function is as follows. Sliding clamp subunit that acts as a moving platform for DNA processing. Responsible for tethering the catalytic subunit of DNA polymerase and other proteins to DNA during high-speed replication. The polypeptide is DNA polymerase sliding clamp (Methanothrix thermoacetophila (strain DSM 6194 / JCM 14653 / NBRC 101360 / PT) (Methanosaeta thermophila)).